The primary structure comprises 476 residues: Ribulose bisphosphate carboxylase large chain (476 aa).

Residues asparagine 124 and threonine 174 each coordinate substrate. Lysine 176 functions as the Proton acceptor in the catalytic mechanism. Lysine 178 serves as a coordination point for substrate. The Mg(2+) site is built by lysine 202, aspartate 204, and glutamate 205. Lysine 202 carries the N6-carboxylysine modification. Residue histidine 295 is the Proton acceptor of the active site. Arginine 296, histidine 328, and serine 380 together coordinate substrate.

Belongs to the RuBisCO large chain family. Type I subfamily. As to quaternary structure, heterohexadecamer of 8 large chains and 8 small chains; disulfide-linked. The disulfide link is formed within the large subunit homodimers. It depends on Mg(2+) as a cofactor. Post-translationally, the disulfide bond which can form in the large chain dimeric partners within the hexadecamer appears to be associated with oxidative stress and protein turnover.

The protein resides in the carboxysome. It catalyses the reaction 2 (2R)-3-phosphoglycerate + 2 H(+) = D-ribulose 1,5-bisphosphate + CO2 + H2O. It carries out the reaction D-ribulose 1,5-bisphosphate + O2 = 2-phosphoglycolate + (2R)-3-phosphoglycerate + 2 H(+). In terms of biological role, ruBisCO catalyzes two reactions: the carboxylation of D-ribulose 1,5-bisphosphate, the primary event in carbon dioxide fixation, as well as the oxidative fragmentation of the pentose substrate in the photorespiration process. Both reactions occur simultaneously and in competition at the same active site. This chain is Ribulose bisphosphate carboxylase large chain, found in Trichormus variabilis (strain ATCC 29413 / PCC 7937) (Anabaena variabilis).